Consider the following 159-residue polypeptide: Ribosomal RNA large subunit methyltransferase H (159 aa).

Positions 76 and 108 each coordinate S-adenosyl-L-methionine.

The protein belongs to the RNA methyltransferase RlmH family. As to quaternary structure, homodimer.

The protein localises to the cytoplasm. It catalyses the reaction pseudouridine(1915) in 23S rRNA + S-adenosyl-L-methionine = N(3)-methylpseudouridine(1915) in 23S rRNA + S-adenosyl-L-homocysteine + H(+). Functionally, specifically methylates the pseudouridine at position 1915 (m3Psi1915) in 23S rRNA. In Natranaerobius thermophilus (strain ATCC BAA-1301 / DSM 18059 / JW/NM-WN-LF), this protein is Ribosomal RNA large subunit methyltransferase H.